The sequence spans 1111 residues: Phytochrome C (1111 aa).

The region spanning 213–393 (NMLLLCDALV…VFGVQINKEA (181 aa)) is the GAF domain. A phytochromobilin-binding site is contributed by Cys-318. 2 PAS domains span residues 604–674 (IVNE…LEGS) and 737–808 (DYAR…TKLR). Residues 889 to 1111 (YLRHEVKDPE…FVILTEFPLI (223 aa)) enclose the Histidine kinase domain.

The protein belongs to the phytochrome family. As to quaternary structure, homodimer. Post-translationally, contains one covalently linked phytochromobilin chromophore.

Regulatory photoreceptor which exists in two forms that are reversibly interconvertible by light: the Pr form that absorbs maximally in the red region of the spectrum and the Pfr form that absorbs maximally in the far-red region. Photoconversion of Pr to Pfr induces an array of morphogenic responses, whereas reconversion of Pfr to Pr cancels the induction of those responses. Pfr controls the expression of a number of nuclear genes including those encoding the small subunit of ribulose-bisphosphate carboxylase, chlorophyll A/B binding protein, protochlorophyllide reductase, rRNA, etc. It also controls the expression of its own gene(s) in a negative feedback fashion. In Arabidopsis thaliana (Mouse-ear cress), this protein is Phytochrome C (PHYC).